Consider the following 372-residue polypeptide: Carbamoyl phosphate synthase small chain (372 aa).

Residues 1-184 (MKAYIYLEND…SFQKFNDAKR (184 aa)) are CPSase. L-glutamine-binding residues include Ser-45, Gly-240, and Gly-242. The Glutamine amidotransferase type-1 domain occupies 188-372 (KVAVIDYGVK…YIFKEFMNLM (185 aa)). Catalysis depends on Cys-268, which acts as the Nucleophile. Positions 269, 272, 310, and 313 each coordinate L-glutamine. Catalysis depends on residues His-351 and Glu-353.

It belongs to the CarA family. In terms of assembly, composed of two chains; the small (or glutamine) chain promotes the hydrolysis of glutamine to ammonia, which is used by the large (or ammonia) chain to synthesize carbamoyl phosphate. Tetramer of heterodimers (alpha,beta)4.

The enzyme catalyses hydrogencarbonate + L-glutamine + 2 ATP + H2O = carbamoyl phosphate + L-glutamate + 2 ADP + phosphate + 2 H(+). It catalyses the reaction L-glutamine + H2O = L-glutamate + NH4(+). Its pathway is amino-acid biosynthesis; L-arginine biosynthesis; carbamoyl phosphate from bicarbonate: step 1/1. It functions in the pathway pyrimidine metabolism; UMP biosynthesis via de novo pathway; (S)-dihydroorotate from bicarbonate: step 1/3. Small subunit of the glutamine-dependent carbamoyl phosphate synthetase (CPSase). CPSase catalyzes the formation of carbamoyl phosphate from the ammonia moiety of glutamine, carbonate, and phosphate donated by ATP, constituting the first step of 2 biosynthetic pathways, one leading to arginine and/or urea and the other to pyrimidine nucleotides. The small subunit (glutamine amidotransferase) binds and cleaves glutamine to supply the large subunit with the substrate ammonia. This chain is Carbamoyl phosphate synthase small chain, found in Campylobacter jejuni subsp. jejuni serotype O:2 (strain ATCC 700819 / NCTC 11168).